The chain runs to 148 residues: Large ribosomal subunit protein uL15 (148 aa).

Positions 1–30 (MPSRLRKTRKLRGHVSHGHGRIGKHRKHPG) are enriched in basic residues. Positions 1–37 (MPSRLRKTRKLRGHVSHGHGRIGKHRKHPGGRGNAGG) are disordered. A (3S)-3-hydroxyhistidine modification is found at H39. N6-acetyllysine is present on residues K47 and K55. S68 carries the phosphoserine modification. The residue at position 110 (K110) is an N6-acetyllysine.

This sequence belongs to the universal ribosomal protein uL15 family. As to quaternary structure, component of the large ribosomal subunit. Post-translationally, hydroxylated on His-39 by MINA.

It localises to the cytoplasm. Functionally, component of the large ribosomal subunit. The ribosome is a large ribonucleoprotein complex responsible for the synthesis of proteins in the cell. The protein is Large ribosomal subunit protein uL15 (RPL27A) of Bos taurus (Bovine).